The following is a 170-amino-acid chain: Transcriptional repressor NrdR (170 aa).

A zinc finger spans residues Cys3–Cys34. One can recognise an ATP-cone domain in the interval Pro49 to Glu139. The interval Ser151–Ala170 is disordered. Residues Thr160 to Ala170 show a composition bias toward basic and acidic residues.

It belongs to the NrdR family. It depends on Zn(2+) as a cofactor.

In terms of biological role, negatively regulates transcription of bacterial ribonucleotide reductase nrd genes and operons by binding to NrdR-boxes. This is Transcriptional repressor NrdR from Marinomonas sp. (strain MWYL1).